We begin with the raw amino-acid sequence, 915 residues long: Isoleucine--tRNA ligase (915 aa).

The 'HIGH' region motif lies at 64–74 (PYANGNFHVGH). Residue Glu557 coordinates L-isoleucyl-5'-AMP. The short motif at 598 to 602 (AMSKS) is the 'KMSKS' region element. Lys601 contacts ATP. Residues Cys887, Cys890, Cys902, and Cys905 each coordinate Zn(2+).

This sequence belongs to the class-I aminoacyl-tRNA synthetase family. IleS type 1 subfamily. In terms of assembly, monomer. Zn(2+) serves as cofactor.

The protein localises to the cytoplasm. It catalyses the reaction tRNA(Ile) + L-isoleucine + ATP = L-isoleucyl-tRNA(Ile) + AMP + diphosphate. Functionally, catalyzes the attachment of isoleucine to tRNA(Ile). As IleRS can inadvertently accommodate and process structurally similar amino acids such as valine, to avoid such errors it has two additional distinct tRNA(Ile)-dependent editing activities. One activity is designated as 'pretransfer' editing and involves the hydrolysis of activated Val-AMP. The other activity is designated 'posttransfer' editing and involves deacylation of mischarged Val-tRNA(Ile). This is Isoleucine--tRNA ligase from Leptospira biflexa serovar Patoc (strain Patoc 1 / ATCC 23582 / Paris).